The following is a 77-amino-acid chain: Acyl carrier protein (77 aa).

One can recognise a Carrier domain in the interval 1–76; the sequence is MSLEDDVKAI…DVIKYIQERQ (76 aa). At Ser-36 the chain carries O-(pantetheine 4'-phosphoryl)serine.

The protein belongs to the acyl carrier protein (ACP) family. 4'-phosphopantetheine is transferred from CoA to a specific serine of apo-ACP by AcpS. This modification is essential for activity because fatty acids are bound in thioester linkage to the sulfhydryl of the prosthetic group.

It is found in the cytoplasm. It participates in lipid metabolism; fatty acid biosynthesis. Functionally, carrier of the growing fatty acid chain in fatty acid biosynthesis. This Chlamydia trachomatis serovar A (strain ATCC VR-571B / DSM 19440 / HAR-13) protein is Acyl carrier protein.